A 368-amino-acid chain; its full sequence is 1-deoxy-D-xylulose 5-phosphate reductoisomerase (368 aa).

Residues Thr-7, Gly-8, Ser-9, Ile-10, Gly-31, Lys-32, Asn-33, and Asn-113 each coordinate NADPH. Lys-114 is a 1-deoxy-D-xylulose 5-phosphate binding site. Glu-115 is an NADPH binding site. A Mn(2+)-binding site is contributed by Asp-133. 1-deoxy-D-xylulose 5-phosphate is bound by residues Ser-134, Glu-135, Ser-158, and His-181. A Mn(2+)-binding site is contributed by Glu-135. NADPH is bound at residue Gly-187. The 1-deoxy-D-xylulose 5-phosphate site is built by Ser-194, Asn-199, Lys-200, and Glu-203. Glu-203 serves as a coordination point for Mn(2+).

It belongs to the DXR family. Mg(2+) is required as a cofactor. Mn(2+) serves as cofactor.

The catalysed reaction is 2-C-methyl-D-erythritol 4-phosphate + NADP(+) = 1-deoxy-D-xylulose 5-phosphate + NADPH + H(+). Its pathway is isoprenoid biosynthesis; isopentenyl diphosphate biosynthesis via DXP pathway; isopentenyl diphosphate from 1-deoxy-D-xylulose 5-phosphate: step 1/6. In terms of biological role, catalyzes the NADPH-dependent rearrangement and reduction of 1-deoxy-D-xylulose-5-phosphate (DXP) to 2-C-methyl-D-erythritol 4-phosphate (MEP). The protein is 1-deoxy-D-xylulose 5-phosphate reductoisomerase of Helicobacter pylori (strain J99 / ATCC 700824) (Campylobacter pylori J99).